The chain runs to 219 residues: Response regulator ArlR (219 aa).

Residues 3–116 (NILIVEDEQN…ELFARIRAVL (114 aa)) enclose the Response regulatory domain. Residue Asp52 is modified to 4-aspartylphosphate. The ompR/PhoB-type DNA-binding region spans 122–219 (KDIIDINGIK…TVRGVGYVIR (98 aa)).

In terms of processing, phosphorylated by ArlS.

The protein resides in the cytoplasm. Member of the two-component regulatory system ArlS/ArlR. The polypeptide is Response regulator ArlR (arlR) (Staphylococcus haemolyticus (strain JCSC1435)).